The primary structure comprises 413 residues: Serine hydroxymethyltransferase (413 aa).

(6S)-5,6,7,8-tetrahydrofolate is bound by residues L119 and 123 to 125 (GHL). K228 carries the N6-(pyridoxal phosphate)lysine modification. 351 to 353 (SPF) contacts (6S)-5,6,7,8-tetrahydrofolate.

It belongs to the SHMT family. In terms of assembly, homodimer. It depends on pyridoxal 5'-phosphate as a cofactor.

Its subcellular location is the cytoplasm. The enzyme catalyses (6R)-5,10-methylene-5,6,7,8-tetrahydrofolate + glycine + H2O = (6S)-5,6,7,8-tetrahydrofolate + L-serine. It participates in one-carbon metabolism; tetrahydrofolate interconversion. It functions in the pathway amino-acid biosynthesis; glycine biosynthesis; glycine from L-serine: step 1/1. Functionally, catalyzes the reversible interconversion of serine and glycine with tetrahydrofolate (THF) serving as the one-carbon carrier. This reaction serves as the major source of one-carbon groups required for the biosynthesis of purines, thymidylate, methionine, and other important biomolecules. Also exhibits THF-independent aldolase activity toward beta-hydroxyamino acids, producing glycine and aldehydes, via a retro-aldol mechanism. This Clostridium botulinum (strain Langeland / NCTC 10281 / Type F) protein is Serine hydroxymethyltransferase.